A 108-amino-acid chain; its full sequence is Heme-degrading monooxygenase HmoA (108 aa).

In terms of domain architecture, ABM spans 2–95; the sequence is FVQLRKMTVK…DYLISTEVSM (94 aa). Histidine 76 contributes to the heme binding site.

This sequence belongs to the antibiotic biosynthesis monooxygenase family. In terms of assembly, homodimer.

The protein localises to the cytoplasm. It carries out the reaction heme b + 3 reduced [NADPH--hemoprotein reductase] + 3 O2 = biliverdin IXalpha + CO + Fe(2+) + 3 oxidized [NADPH--hemoprotein reductase] + 3 H2O + H(+). Its function is as follows. Allows bacterial pathogens to use the host heme as an iron source. Catalyzes the oxidative degradation of the heme macrocyclic porphyrin ring in the presence of a suitable electron donor such as ascorbate or NADPH--cytochrome P450 reductase, with subsequent release of free iron. The protein is Heme-degrading monooxygenase HmoA (hmoA) of Bacillus subtilis (strain 168).